The chain runs to 55 residues: MARQTDVRPIVRLRSTAGTGYTYVTRKNRRNDPDRLVLRKYDPIVRQHVEFREAR.

Belongs to the bacterial ribosomal protein bL33 family.

This is Large ribosomal subunit protein bL33A from Salinispora tropica (strain ATCC BAA-916 / DSM 44818 / JCM 13857 / NBRC 105044 / CNB-440).